Here is a 585-residue protein sequence, read N- to C-terminus: Adenine deaminase (585 aa).

This sequence belongs to the metallo-dependent hydrolases superfamily. Adenine deaminase family. It depends on Mn(2+) as a cofactor.

The catalysed reaction is adenine + H2O + H(+) = hypoxanthine + NH4(+). This Halalkalibacterium halodurans (strain ATCC BAA-125 / DSM 18197 / FERM 7344 / JCM 9153 / C-125) (Bacillus halodurans) protein is Adenine deaminase.